The sequence spans 698 residues: Probable Xaa-Pro aminopeptidase P (698 aa).

Positions 509, 520, 604, and 618 each coordinate Mn(2+).

This sequence belongs to the peptidase M24B family. Mn(2+) serves as cofactor.

The catalysed reaction is Release of any N-terminal amino acid, including proline, that is linked to proline, even from a dipeptide or tripeptide.. Functionally, catalyzes the removal of a penultimate prolyl residue from the N-termini of peptides. The sequence is that of Probable Xaa-Pro aminopeptidase P (AMPP) from Arthroderma benhamiae (strain ATCC MYA-4681 / CBS 112371) (Trichophyton mentagrophytes).